The primary structure comprises 53 residues: 20 kDa chaperonin (53 aa).

Cpn-10 domain regions lie at residues 1–10 and 11–53; these read YTSIKPLGDR and VAEA…KITP.

Belongs to the GroES chaperonin family. In terms of assembly, forms stable complexes with cpn60 in the presence of ATP. Homotetramer.

The protein resides in the plastid. It localises to the chloroplast. Functionally, seems to function only as a co-chaperone, along with cpn60, and in certain cases is essential for the discharge of biologically active proteins from cpn60. This chain is 20 kDa chaperonin, found in Populus euphratica (Euphrates poplar).